The chain runs to 153 residues: Histone H2B.3 (153 aa).

Basic and acidic residues-rich tracts occupy residues 1–28 (MAPK…EKAP) and 36–53 (EKRL…EGRK). Residues 1–61 (MAPKAEKKPA…RKAGRKKAKK (61 aa)) are disordered. Residues Lys7 and Lys37 each carry the N6-acetyllysine modification. Residue Lys149 forms a Glycyl lysine isopeptide (Lys-Gly) (interchain with G-Cter in ubiquitin) linkage.

Belongs to the histone H2B family. As to quaternary structure, the nucleosome is a histone octamer containing two molecules each of H2A, H2B, H3 and H4 assembled in one H3-H4 heterotetramer and two H2A-H2B heterodimers. The octamer wraps approximately 147 bp of DNA. Post-translationally, can be acetylated to form H2BK6ac and H2BK33ac. In terms of processing, monoubiquitinated by BRE1 to form H2BK143ub1 and deubiquitinated by UBP26. Required for heterochromatic histone H3 di- and trimethylation at H3K4me. May give a specific tag for epigenetic transcriptional activation.

It is found in the nucleus. The protein resides in the chromosome. Functionally, core component of nucleosome. Nucleosomes wrap and compact DNA into chromatin, limiting DNA accessibility to the cellular machineries which require DNA as a template. Histones thereby play a central role in transcription regulation, DNA repair, DNA replication and chromosomal stability. DNA accessibility is regulated via a complex set of post-translational modifications of histones, also called histone code, and nucleosome remodeling. This Oryza sativa subsp. japonica (Rice) protein is Histone H2B.3 (H2B.3).